A 48-amino-acid polypeptide reads, in one-letter code: Ribulose bisphosphate carboxylase large chain (48 aa).

This sequence belongs to the RuBisCO large chain family. Type I subfamily. In terms of assembly, heterohexadecamer of 8 large chains and 8 small chains.

The protein resides in the plastid. The protein localises to the chloroplast. The enzyme catalyses 2 (2R)-3-phosphoglycerate + 2 H(+) = D-ribulose 1,5-bisphosphate + CO2 + H2O. It catalyses the reaction D-ribulose 1,5-bisphosphate + O2 = 2-phosphoglycolate + (2R)-3-phosphoglycerate + 2 H(+). RuBisCO catalyzes two reactions: the carboxylation of D-ribulose 1,5-bisphosphate, the primary event in carbon dioxide fixation, as well as the oxidative fragmentation of the pentose substrate in the photorespiration process. Both reactions occur simultaneously and in competition at the same active site. This is Ribulose bisphosphate carboxylase large chain (rbcL) from Pinus pinaster (Maritime pine).